Consider the following 116-residue polypeptide: HVA22-like protein e (116 aa).

The next 3 membrane-spanning stretches (helical) occupy residues 12 to 32, 42 to 62, and 63 to 83; these read HSLA…VIAI, QWLA…ILQS, and LLEW…WLVL.

It belongs to the DP1 family. As to expression, predominantly expressed in stem.

Its subcellular location is the membrane. The sequence is that of HVA22-like protein e (HVA22E) from Arabidopsis thaliana (Mouse-ear cress).